The chain runs to 732 residues: MRIALVATLVLTSGIANADEGQWQPYQMPSIADKLSERGIDIPAEKLADLTSYPMNAVVGLGYCTASFVSPQGLVVTNHHCAYKAIQYNTKQEHNYLEQGFLATSMDKEPSAGPNERLYITEAVTDVTKDVTKELSQDPLTRYEEIQNNSKALIKNCEVDDNYRCNVRSFHNGLEYYLIKQLMIRDVRLVYAPPESVGGYGGDIDNYEYPRHSGDFAFLRAYVGKDGKPAAYAEDNIPYKPKSYLKVNADGVKAGDGVFVAGYPGTTSRYNLTSELKFASDWLYPTQAKRYQLQIDTINAMGQEDADIAIKYAGNMASMANRMKKLNGLLAGFKATDIIGIKQSREDNFLAWLKQNPKLNQNLIAELEVLLAEQQQVFQSNYYFTNAQSSTLLTAANSLYRLAKEKQKSDAEREIGYQERDLAMFSSRLKRIDSSFHVDVDKTLWQQDLRAYLAQPNRIAALDDALDLNNKETNLEAKLDGLYSLTTLTDQAQRLAWMDADTTTFETSTDPFIRLAVALYDTNMAQEKAEKILDGKLSTARPDYMAAVIEYYKANNWPVYPDANGTLRISYGMVDGYQSRDALYKQPFTRLDGIVAKHTGAEPYNAPQKLLDAISEQRFGDHLVKSVYQDPRGWICRLFSCLDKPEEFNSVPVNFLSSVDTTGGNSGSPVFNGKGELVGLNFDSTYEAITKDWFFNPTITRAVHVDIRYILWMMDKVDHADNLIKELDLVRN.

Positions 1 to 18 are cleaved as a signal peptide; sequence MRIALVATLVLTSGIANA. Active-site charge relay system residues include His-80, Asp-215, and Ser-666.

Belongs to the peptidase S46 family.

Functionally, catalyzes the removal of dipeptides from the N-terminus of oligopeptides. Shows a strict specificity for acidic residues (Asp or Glu) in the P1 position, and has probably a hydrophobic residue preference at the P2 position. Preferentially cleaves the synthetic substrate Leu-Glu-methylcoumaryl-7-amide (Leu-Glu-MCA) as compared to Leu-Asp-MCA. The protein is Asp/Glu-specific dipeptidyl-peptidase (dpp11) of Shewanella putrefaciens (strain CN-32 / ATCC BAA-453).